A 383-amino-acid polypeptide reads, in one-letter code: 4-hydroxy-3-methylbut-2-en-1-yl diphosphate synthase (flavodoxin) (383 aa).

Residues C275, C278, C310, and E317 each coordinate [4Fe-4S] cluster.

It belongs to the IspG family. Requires [4Fe-4S] cluster as cofactor.

The catalysed reaction is (2E)-4-hydroxy-3-methylbut-2-enyl diphosphate + oxidized [flavodoxin] + H2O + 2 H(+) = 2-C-methyl-D-erythritol 2,4-cyclic diphosphate + reduced [flavodoxin]. Its pathway is isoprenoid biosynthesis; isopentenyl diphosphate biosynthesis via DXP pathway; isopentenyl diphosphate from 1-deoxy-D-xylulose 5-phosphate: step 5/6. Functionally, converts 2C-methyl-D-erythritol 2,4-cyclodiphosphate (ME-2,4cPP) into 1-hydroxy-2-methyl-2-(E)-butenyl 4-diphosphate. In Dinoroseobacter shibae (strain DSM 16493 / NCIMB 14021 / DFL 12), this protein is 4-hydroxy-3-methylbut-2-en-1-yl diphosphate synthase (flavodoxin).